The chain runs to 214 residues: Large ribosomal subunit protein uL3 (214 aa).

Q153 carries the N5-methylglutamine modification.

It belongs to the universal ribosomal protein uL3 family. Part of the 50S ribosomal subunit. Forms a cluster with proteins L14 and L19. Post-translationally, methylated by PrmB.

In terms of biological role, one of the primary rRNA binding proteins, it binds directly near the 3'-end of the 23S rRNA, where it nucleates assembly of the 50S subunit. This chain is Large ribosomal subunit protein uL3, found in Methylobacillus flagellatus (strain ATCC 51484 / DSM 6875 / VKM B-1610 / KT).